Consider the following 90-residue polypeptide: Probable Fe(2+)-trafficking protein (90 aa).

It belongs to the Fe(2+)-trafficking protein family.

In terms of biological role, could be a mediator in iron transactions between iron acquisition and iron-requiring processes, such as synthesis and/or repair of Fe-S clusters in biosynthetic enzymes. This Paracidovorax citrulli (strain AAC00-1) (Acidovorax citrulli) protein is Probable Fe(2+)-trafficking protein.